A 464-amino-acid polypeptide reads, in one-letter code: MIPVQGLRGATVAVLGLGRTGMSAARALRAGGALPLCWDDNPDARARAQQEGFTCTQLSRVADFDDIACLIVSPGIPHLYPAPNPVVRLALQAGVPVDNDIGLFFRSFATNAWANFDTAPRVVAVTGSNGKSTTSALIHHILEHVGRPATLAGNIGRGVLDIDPPHDGEVVVLELSSYQTDLARSLTPDVAVFTNLSEDHLDRHGGMGGYFAAKRRLFAEGGPDRAIVGVDEDEGLFLAGQLAEGRADDRVIRISFAQKLTGPGWQVFARKGFLSEYRKGKQIASVDLRSVPGLPGVHNHQNACAAYAVCRSLGLAPKVIEAALHSFQGLPHRSQLVGQKDGVRFVNDSKATNADAAAKALAAFPSIRWICGGLEKDGGMDALRNASASVVKAYVIGREAAAFAMKLPVEAEICTTMAQAVEKAAREAEAGDVVLLAPAAASFDQYDNFEQRGDDFMQEVAKYL.

127-133 (GSNGKST) serves as a coordination point for ATP.

It belongs to the MurCDEF family.

It is found in the cytoplasm. It catalyses the reaction UDP-N-acetyl-alpha-D-muramoyl-L-alanine + D-glutamate + ATP = UDP-N-acetyl-alpha-D-muramoyl-L-alanyl-D-glutamate + ADP + phosphate + H(+). Its pathway is cell wall biogenesis; peptidoglycan biosynthesis. Functionally, cell wall formation. Catalyzes the addition of glutamate to the nucleotide precursor UDP-N-acetylmuramoyl-L-alanine (UMA). This Roseobacter denitrificans (strain ATCC 33942 / OCh 114) (Erythrobacter sp. (strain OCh 114)) protein is UDP-N-acetylmuramoylalanine--D-glutamate ligase.